Reading from the N-terminus, the 4684-residue chain is Plectin (4684 aa).

The globular 1 stretch occupies residues 1–1470 (MVAGMLMPRD…SELTTLTSQY (1470 aa)). A phosphoserine mark is found at Phe20 and Arg21. At Val26 the chain carries Phosphotyrosine. A Phosphoserine modification is found at Gly42. Residue Thr113 is modified to Phosphothreonine. Phosphoserine is present on residues Ser125 and Ser149. The interval 144–179 (ELEEVSPETPVVPATTQRTLARPGPEPAPATDERDR) is disordered. The interval 175–400 (DERDRVQKKT…YVSSLYDAMP (226 aa)) is actin-binding. Calponin-homology (CH) domains follow at residues 179 to 282 (RVQK…LHFQ) and 295 to 400 (MTAK…DAMP). A Spectrin 1 repeat occupies 645–710 (LQSVQRRPEL…SIEEFRAKIE (66 aa)). Ser720 bears the Phosphoserine mark. Spectrin repeat units follow at residues 740–824 (KLLN…REDH) and 837–930 (LQTQ…AVVQ). The SH3 domain maps to 941–998 (RGRLPLLAVCDYKQVEVTVHKGDECQLVGPAQPSHWKVLSSSGSEAAVPSVCFLVPPP). The interval 964–4574 (ECQLVGPAQP…VGAYSKYLTC (3611 aa)) is required for interaction with intermediate filament proteins. Ser1047 bears the Phosphoserine mark. Residues 1315 to 1415 (RERVAQLLER…QRFAKQYINA (101 aa)) form a Spectrin 4 repeat. Ser1435 is modified (phosphoserine). The stretch at 1469–2756 (QYIKFISETL…AHSEEVTASQ (1288 aa)) forms a coiled coil. Residues 1471–2755 (IKFISETLRR…LAHSEEVTAS (1285 aa)) form a central fibrous rod domain region. A disordered region spans residues 1618–1650 (RAEEAEAQKRQAQEEAERLRRQVQDESQRKRQA). A Phosphoserine modification is found at Ser1721. An N6-acetyllysine modification is found at Lys1725. At Ser1732 the chain carries Phosphoserine. Disordered regions lie at residues 1794-1836 (LAQA…KQRQ), 2105-2139 (EAAR…EAAR), and 2217-2307 (RGEA…MEKH). 3 stretches are compositionally biased toward basic and acidic residues: residues 1798 to 1836 (EAEK…KQRQ), 2105 to 2128 (EAAR…ERVQ), and 2217 to 2258 (RGEA…KQSA). Over residues 2259 to 2272 (EEQAQARAQAQAAA) the composition is skewed to low complexity. Residues 2273 to 2288 (EKLRKEAEQEAARRAQ) show a composition bias toward basic and acidic residues. Ser2631 is modified (phosphoserine). Lys2636 is modified (N6-acetyllysine). Disordered regions lie at residues 2668-2707 (REEQ…RRKQ) and 2763-2784 (LPNG…HSFD). Positions 2679-2707 (EQERQRLVASMEEARRRQHEAEEGVRRKQ) are enriched in basic and acidic residues. The tract at residues 2756–4684 (QVAATKTLPN…SLGGPESAVA (1929 aa)) is globular 2. A phosphoserine mark is found at Ser2782 and Ser2802. Plectin repeat units lie at residues 2826 to 2863 (RHYL…PGTA), 2864 to 2901 (LILL…PELH), 2902 to 2939 (HKLL…REHG), 2940 to 2977 (IRLL…EEMN), and 2981 to 3015 (ADPS…PETG). Thr2886 is subject to Phosphothreonine. A Phosphotyrosine modification is found at Tyr3033. The residue at position 3036 (Ser3036) is a Phosphoserine. N6-acetyllysine occurs at positions 3053 and 3091. 6 Plectin repeats span residues 3116 to 3153 (SLVP…VDTV), 3154 to 3191 (RRAL…SDMA), 3192 to 3229 (VALL…PEFH), 3230 to 3267 (EKLL…REQG), 3268 to 3305 (LRLL…EETS), and 3306 to 3343 (RALS…QLTG). Residues 3310–3331 (APRADAKAYSDPSTGEPATYGE) form a disordered region. Tyr3362 carries the phosphotyrosine modification. At Lys3420 the chain carries N6-acetyllysine. 5 Plectin repeats span residues 3485–3522 (RTLL…ATTA), 3523–3560 (ALLL…PELH), 3561–3598 (EQLL…RQHG), 3599–3636 (IRLL…EEMN), and 3640–3674 (ADPS…PETG). The residue at position 3580 (Ser3580) is a Phosphoserine. At Thr3785 the chain carries Phosphothreonine. Plectin repeat units lie at residues 3820-3857 (WCYL…AEVA), 3858-3895 (RLLL…PELH), 3896-3933 (DRLL…TEEA), 3934-3971 (LRLL…KDTH), and 3975-4008 (SEPS…DGTG). Residues 3956 to 4293 (PLEVAYQRGY…ETGKEMSVYE (338 aa)) form a required for interaction with type2 keratins, DES and VIM region. Thr4030 is subject to Phosphothreonine. Residue Ser4054 is modified to Phosphoserine. Plectin repeat units lie at residues 4063–4100 (QKFL…PGTA), 4101–4138 (FELL…PEFK), 4139–4176 (DKLL…KDHG), 4177–4214 (IRLL…EEMN), 4218–4252 (TDPS…PQTG), 4265–4305 (RKTS…HQTY), and 4319–4356 (TISS…RSAL). The binding to intermediate filaments stretch occupies residues 4250 to 4300 (QTGLCLLPLKEKKRERKTSSKSSVRKRRVVIVDPETGKEMSVYEAYRKGLI). Residues Ser4382, Ser4384, Ser4385, Ser4386, Ser4389, Ser4390, Ser4391, and Ser4392 each carry the phosphoserine modification. Tyr4393 carries the post-translational modification Phosphotyrosine. Residues Ser4396, Ser4400, and Ser4406 each carry the phosphoserine modification. 5 Plectin repeats span residues 4408–4445 (SDPT…NITG), 4446–4483 (QRLL…KIMV), 4484–4521 (DRIN…YEAG), 4522–4559 (QRFL…ARTA), and 4560–4597 (QKLR…EGTG). A Phosphothreonine modification is found at Thr4411. A required for efficient interaction with KRT5 and KRT14 heterodimers region spans residues 4505-4574 (MSAAQALKKG…VGAYSKYLTC (70 aa)). Phosphothreonine; by CDK1 is present on Thr4539. 2 positions are modified to phosphoserine: Ser4607 and Ser4613. Low complexity predominate over residues 4611 to 4678 (YYSPYSVSGS…ASGSSASLGG (68 aa)). The tract at residues 4611–4684 (YYSPYSVSGS…SLGGPESAVA (74 aa)) is disordered. At Tyr4615 the chain carries Phosphotyrosine. Ser4616, Ser4618, and Ser4622 each carry phosphoserine. Thr4623 is subject to Phosphothreonine. A 4 X 4 AA tandem repeats of G-S-R-X region spans residues 4625-4640 (GSRTGSRTGSRAGSRR). Ser4626 bears the Phosphoserine mark. 2 positions are modified to omega-N-methylarginine: Arg4627 and Arg4640. Residues Ser4642, Ser4672, and Ser4675 each carry the phosphoserine modification.

This sequence belongs to the plakin or cytolinker family. In terms of assembly, homodimer or homotetramer. Interacts (via actin-binding domain) with SYNE3. Interacts (via calponin-homology (CH) 1 domain) with VIM (via rod region). Interacts (via N-terminus) with DST isoform 2 (via N-terminus). Interacts with FER. Interacts with TOR1A. Interacts with ANK3. Identified in complexes that contain VIM, EZR, AHNAK, BFSP1, BFSP2, ANK2, PLEC, PRX and spectrin. Interacts with COL17A1. As to quaternary structure, interacts with KRT14, heterodimers consisting of KRT8 and KRT18, heterodimers consisting of KRT5 and KRT14, heterodimers consisting of KRT14 and KRT15, and heterodimers consisting of KRT1 and KRT10. Interacts with DES and VIM. Post-translationally, phosphorylated by CDK1; regulates dissociation from intermediate filaments during mitosis. In terms of tissue distribution, widely expressed with highest levels in muscle, heart, placenta and spinal cord.

Its subcellular location is the cytoplasm. The protein localises to the cytoskeleton. The protein resides in the cell junction. It localises to the hemidesmosome. It is found in the cell projection. Its subcellular location is the podosome. Functionally, interlinks intermediate filaments with microtubules and microfilaments and anchors intermediate filaments to desmosomes or hemidesmosomes. Could also bind muscle proteins such as actin to membrane complexes in muscle. May be involved not only in the filaments network, but also in the regulation of their dynamics. Structural component of muscle. Isoform 9 plays a major role in the maintenance of myofiber integrity. The protein is Plectin (PLEC) of Homo sapiens (Human).